The chain runs to 1420 residues: Protein NPAT (1420 aa).

The interaction with MIZF stretch occupies residues 1-319 (MLLPSDVARL…EEAIQDILEQ (319 aa)). One can recognise a LisH domain in the interval 3–35 (LPSDVARLVLGYLQQENLTSTCQTFILESSNLK). Required for activation of histone gene transcription and interaction with MIZF stretches follow at residues 5–25 (SDVA…STCQ) and 121–145 (KRQR…YASG). A compositionally biased stretch (polar residues) spans 179–190 (QPQSTVTNTAGE). A disordered region spans residues 179-236 (QPQSTVTNTAGESLNIIPGPQERKTQTSLMSPGRRKSESQKKSLTSSGPHSSRNFQDP). Ser209 carries the post-translational modification Phosphoserine. Residues 220–235 (KSLTSSGPHSSRNFQD) show a composition bias toward polar residues. Residues 263-339 (KLAENINKFL…FDLFDYGKTK (77 aa)) form a mediates transcriptional activation region. Over residues 534-573 (SQSTPLTTKPSKSQLCENSNNIIKVKTNPQASESADSSET) the composition is skewed to polar residues. Disordered stretches follow at residues 534-612 (SQST…GESL), 625-670 (EEPA…KDGD), and 696-727 (KNNN…NSTE). A phosphoserine mark is found at Ser552 and Ser598. A required for acceleration of G1 phase region spans residues 628–652 (APSDKQLSNDAASVDLNPTESKTEP). Residues 632 to 658 (KQLSNDAASVDLNPTESKTEPLQSASA) show a composition bias toward polar residues. Low complexity predominate over residues 697 to 712 (NNNSLSSESGGSVGVS). The span at 713–727 (PETQNTDGKTSNSTE) shows a compositional bias: polar residues. Residues Ser771 and Ser773 each carry the phosphoserine; by CDK2 modification. Required for acceleration of G1 phase stretches follow at residues 822 to 847 (QNED…IQLM) and 1033 to 1048 (KMED…RVAP). Disordered stretches follow at residues 1089–1190 (ASFS…NGSL), 1202–1234 (LTKK…KPAS), and 1249–1297 (SPAN…SMPR). A Phosphoserine; by CDK2 modification is found at Ser1096. Glycyl lysine isopeptide (Lys-Gly) (interchain with G-Cter in SUMO2) cross-links involve residues Lys1112 and Lys1144. Basic and acidic residues-rich tracts occupy residues 1135–1146 (TVKEVQSEKKVS) and 1154–1177 (SLHK…KNAD). A Phosphoserine modification is found at Ser1146. The segment covering 1205–1219 (KQATPSNNKNATSVG) has biased composition (polar residues). Lys1223 is modified (N6-acetyllysine). A required for acceleration of G1 phase region spans residues 1223–1247 (KDQKQEQSKPASSLIGAEILQDVPI). Ser1249 carries the post-translational modification Phosphoserine. Thr1264 is subject to Phosphothreonine; by CDK2. Positions 1270–1279 (GEKHKEEPSD) are enriched in basic and acidic residues. Lys1274 is covalently cross-linked (Glycyl lysine isopeptide (Lys-Gly) (interchain with G-Cter in SUMO2)). Residues 1319–1342 (ENSVSMAAHTLMILSRAAIARTTA) are required for acceleration of G1 phase. Thr1343 carries the post-translational modification Phosphothreonine; by CDK2. Residues 1348–1400 (NTQQFRTSSRSTTKKRKIEELDECERNSRTSGKNLANSSVPMKKKKIKKKKLP) are disordered. Residues 1376 to 1387 (RTSGKNLANSSV) are compositionally biased toward polar residues. A compositionally biased stretch (basic residues) spans 1389–1399 (MKKKKIKKKKL).

The protein belongs to the NPAT family. As to quaternary structure, interacts with the cylin/CDK complexes CCNE1/CDK2 and CCNA1/CDK2. Interacts with BZW1, CASP8AP2, CREBBP, MIZF and YY1. Interacts with the RUVBL1, RUVBL2 and TRRAP subunits of the NuA4 complex. May also interact with GAPDH, NME1, NME2 and STIP1. Phosphorylated at Ser-771, Ser-773, Ser-1096, Thr-1264 and Thr-1343 by CCNE1/CDK2 at G1-S transition and until prophase, which promotes association with histone gene clusters and stimulates activation of histone transcription. Also phosphorylated by CCNA1/CDK2 in vitro.

It localises to the nucleus. In terms of biological role, required for progression through the G1 and S phases of the cell cycle and for S phase entry. Activates transcription of the histone H2A, histone H2B, histone H3 and histone H4 genes in conjunction with MIZF. Also positively regulates the ATM, MIZF and PRKDC promoters. Transcriptional activation may be accomplished at least in part by the recruitment of the NuA4 histone acetyltransferase (HAT) complex to target gene promoters. Required for early embryonic development. The polypeptide is Protein NPAT (Npat) (Mus musculus (Mouse)).